The chain runs to 294 residues: tRNA pseudouridine synthase B (294 aa).

The active-site Nucleophile is the aspartate 38.

Belongs to the pseudouridine synthase TruB family. Type 1 subfamily.

It carries out the reaction uridine(55) in tRNA = pseudouridine(55) in tRNA. In terms of biological role, responsible for synthesis of pseudouridine from uracil-55 in the psi GC loop of transfer RNAs. This chain is tRNA pseudouridine synthase B, found in Clostridium perfringens (strain ATCC 13124 / DSM 756 / JCM 1290 / NCIMB 6125 / NCTC 8237 / Type A).